The following is a 447-amino-acid chain: MSHRYIPLTETDKKEMMETIGINSIDELFQDIPEKVRFQGDLNIKPRKSETPLLRELQALANKNVTSDTHVSFLGAGVYDHYIPTVVDHVISRSEFYTAYTPYQPEISQGELQAIFEFQTMIAELTGMDCANSSMYDGGTSFAEAAMLACGHTRNKKIIVSKAVNDQSRAVLHTYAKGQHLEVVEIDVKDTVTDLDALKAAIDEDTACVMVQYPNFFGSIEDLETIKSFTEGTKALFVVSSNPMSLGLLTPPGEFGADLVVGDAQVFGIPAQLGGPHCGYFAATKKLMRKMPGRLVGQTQDDEGNRGFVLTLQAREQHIRRDKATSNICSNQALNALAASVAMSALGKNGVYEMANQNLQKANYMKSRMVEEGFEVLEGTTFNEFVVKFNHPVKEINEKLLDEGFIGGYDLGQVEEQYHNHMLIAVTELRTKEEIDTFIAKVGVFNA.

Belongs to the GcvP family. N-terminal subunit subfamily. The glycine cleavage system is composed of four proteins: P, T, L and H. In this organism, the P 'protein' is a heterodimer of two subunits.

It catalyses the reaction N(6)-[(R)-lipoyl]-L-lysyl-[glycine-cleavage complex H protein] + glycine + H(+) = N(6)-[(R)-S(8)-aminomethyldihydrolipoyl]-L-lysyl-[glycine-cleavage complex H protein] + CO2. In terms of biological role, the glycine cleavage system catalyzes the degradation of glycine. The P protein binds the alpha-amino group of glycine through its pyridoxal phosphate cofactor; CO(2) is released and the remaining methylamine moiety is then transferred to the lipoamide cofactor of the H protein. In Macrococcus caseolyticus (strain JCSC5402) (Macrococcoides caseolyticum), this protein is Probable glycine dehydrogenase (decarboxylating) subunit 1.